A 181-amino-acid polypeptide reads, in one-letter code: Translationally-controlled tumor protein homolog (181 aa).

Residues 1 to 181 form the TCTP domain; the sequence is MLIFKDAFTD…VKEALVEEKQ (181 aa).

The protein belongs to the TCTP family.

The protein localises to the cytoplasm. Functionally, involved in calcium binding and microtubule stabilization. The sequence is that of Translationally-controlled tumor protein homolog from Wuchereria bancrofti.